The chain runs to 541 residues: Valine N-monooxygenase 2 (541 aa).

The Cytoplasmic portion of the chain corresponds to 1–18 (MAMNVSTTATTTASFAST). A helical transmembrane segment spans residues 19–41 (SSMNNTAKILLITLFISIVSTVI). Residues 42 to 541 (KLQKRASYKK…LAPHLYPTSP (500 aa)) are Lumenal-facing. An N-linked (GlcNAc...) asparagine glycan is attached at Asn277. Residue Cys477 participates in heme binding. Asn505 carries N-linked (GlcNAc...) asparagine glycosylation.

The protein belongs to the cytochrome P450 family. Heme serves as cofactor. Expressed in the epidermis, the next two cortex cell layers, the endodermis and the pericycle of leaf petioles. Strong expression around the laticifers among the phloem cells and in parenchymatic cells between the protoxylem and the metaxylem cells. In the leaves, preferentially expressed in the mesophyll cells adjacent to the epidermis.

Its subcellular location is the microsome membrane. The catalysed reaction is L-valine + 2 reduced [NADPH--hemoprotein reductase] + 2 O2 = (E)-2-methylpropanal oxime + 2 oxidized [NADPH--hemoprotein reductase] + CO2 + 3 H2O + 2 H(+). The enzyme catalyses L-valine + reduced [NADPH--hemoprotein reductase] + O2 = N-hydroxy-L-valine + oxidized [NADPH--hemoprotein reductase] + H2O + 2 H(+). It carries out the reaction N-hydroxy-L-valine + reduced [NADPH--hemoprotein reductase] + O2 = N,N-dihydroxy-L-valine + oxidized [NADPH--hemoprotein reductase] + H2O + H(+). It catalyses the reaction L-isoleucine + 2 reduced [NADPH--hemoprotein reductase] + 2 O2 = (1E,2S)-2-methylbutanal oxime + 2 oxidized [NADPH--hemoprotein reductase] + CO2 + 3 H2O + 2 H(+). The catalysed reaction is L-isoleucine + reduced [NADPH--hemoprotein reductase] + O2 = N-hydroxy-L-isoleucine + oxidized [NADPH--hemoprotein reductase] + H2O + 2 H(+). The enzyme catalyses N-hydroxy-L-isoleucine + reduced [NADPH--hemoprotein reductase] + O2 = N,N-dihydroxy-L-isoleucine + oxidized [NADPH--hemoprotein reductase] + H2O + H(+). In terms of biological role, involved in the biosynthesis of the cyanogenic glucosides linamarin and lotaustralin. Can use L-valine or L-isoleucine as substrate. Catalyzes multi-step reactions starting with two successive N-hydroxylations using L-valine and L-isoleucine as substrates leading to the formation of N,N-dihydroxy-L-valine and N,N-dihydroxy-L-isoleucine, respectively; following spontaneous reactions lead to the production of (E)-2-methylpropanal oxime and (1E,2S)-2-methylbutanal oxime, respectively. In Manihot esculenta (Cassava), this protein is Valine N-monooxygenase 2.